Consider the following 554-residue polypeptide: Perforin-1 (554 aa).

An N-terminal signal peptide occupies residues 1 to 20; sequence MATCLFLLGLFLLLPRPVPA. 3 cysteine pairs are disulfide-bonded: cysteine 22/cysteine 75, cysteine 30/cysteine 72, and cysteine 101/cysteine 175. Positions 26-374 constitute an MACPF domain; sequence TRSECKQKHK…HYIMSRARWQ (349 aa). A beta stranded transmembrane segment spans residues 128 to 148; the sequence is WRVGLDVNPRPEANMRASVAG. Residue asparagine 204 is glycosylated (N-linked (GlcNAc...) asparagine). 4 disulfide bridges follow: cysteine 241/cysteine 407, cysteine 376/cysteine 392, cysteine 380/cysteine 394, and cysteine 396/cysteine 406. Residues 256 to 278 traverse the membrane as a beta stranded segment; that stretch reads CLNVEAQVSIGAQASVSSEYKAC. Asparagine 375 carries N-linked (GlcNAc...) asparagine glycosylation. The EGF-like domain maps to 375 to 407; that stretch reads NCSRPCRSGQHKSSHDSCQCECQDSKVTNQDCC. Residues 395–513 enclose the C2 domain; it reads ECQDSKVTNQ…FHEVTCELNH (119 aa). Ca(2+) contacts are provided by glycine 428, aspartate 429, threonine 432, alanine 433, aspartate 435, asparagine 454, glutamate 467, aspartate 483, alanine 484, aspartate 485, tryptophan 488, aspartate 489, aspartate 490, and aspartate 491. Cystine bridges form between cysteine 496–cysteine 509 and cysteine 524–cysteine 533. N-linked (GlcNAc...) asparagine glycosylation occurs at asparagine 548.

The protein belongs to the complement C6/C7/C8/C9 family. In terms of assembly, monomer, as soluble protein. Homooligomer; homooligomerizes to form a pore-forming ring. The cofactor is Ca(2+). In terms of processing, N-glycosylated. The glycosylation sites are facing the interior of the pore. In terms of tissue distribution, detected in cytotoxic T-lymphocytes and natural killer cells.

The protein resides in the cytolytic granule. Its subcellular location is the secreted. The protein localises to the cell membrane. It is found in the endosome lumen. Pore-forming protein that plays a key role in granzyme-mediated programmed cell death, and in defense against virus-infected or neoplastic cells. Can insert into the membrane of target cells in its calcium-bound form, oligomerize and form large pores. Promotes cytolysis and apoptosis of target cells by mediating the passage and uptake of cytotoxic granzymes. Facilitates the delivery of cationic cargo protein, while anionic or neural proteins are not delivered efficiently. Perforin pores allow the release of mature caspase-7 (CASP7) into the extracellular milieu. The chain is Perforin-1 (Prf1) from Mus musculus (Mouse).